Here is a 1979-residue protein sequence, read N- to C-terminus: E3 ubiquitin-protein ligase TTC3 (1979 aa).

An interaction with POLG region spans residues 1 to 230 (MDDFAEGGLS…RHSCMQCVKQ (230 aa)). 2 TPR repeats span residues 231–264 (GELM…RPEN) and 266–298 (LLYG…KNTW). At Ser378 the chain carries Phosphoserine. The segment at 422-457 (CDCHPEFLPPPSQPPRHKGKQKSRNNESEKPSFNSE) is disordered. TPR repeat units follow at residues 536–572 (VLVV…YPNE) and 576–609 (CLAY…ISRL). Residues 783-811 (LAQERMEEDLRESNPPKNEEPEETSDSAQ) form a disordered region. Phosphoserine is present on Ser1009. Disordered stretches follow at residues 1021–1067 (NKGK…GPFA), 1214–1289 (QPDV…EEAK), 1402–1427 (QGSA…SSDS), 1574–1601 (KNDG…DEKT), 1757–1776 (MDSA…GSPT), 1788–1821 (KGAS…KKPS), and 1873–1927 (DEQK…PAPD). The span at 1036–1050 (VGSGAASVAPSSEAV) shows a compositional bias: low complexity. The residue at position 1060 (Ser1060) is a Phosphoserine. Positions 1214–1227 (QPDVKSEALSEDVK) are enriched in basic and acidic residues. Positions 1248 to 1257 (DSDSSSGSAS) are enriched in low complexity. A compositionally biased stretch (basic and acidic residues) spans 1576 to 1586 (DGFDKECEPHP). Composition is skewed to polar residues over residues 1788–1799 (KGASQVSPSEQS) and 1808–1821 (GQAT…KKPS). Ser1794 carries the post-translational modification Phosphoserine. Over residues 1873-1890 (DEQKKKKPNPGKDKKTSE) the composition is skewed to basic and acidic residues. Residues 1931-1971 (CEICHEIFKSKNMRVLKCGHKFHKGCFKQWLKGQSTCPTCG) form an RING-type; atypical zinc finger.

Interacts (when phosphorylated on Ser-378) with AKT1, AKT2 and AKT3 (when phosphorylated). Interacts with CIT. Interacts with POLG. Interacts with HSP70. Interacts with SMURF2. Post-translationally, phosphorylation on Ser-378 by Akt is required for ubiquitin ligase activity. Proteolytically cleaved into differently sized N- and C-terminal fragments.

It is found in the nucleus. The protein resides in the cytoplasm. It localises to the golgi apparatus. It catalyses the reaction S-ubiquitinyl-[E2 ubiquitin-conjugating enzyme]-L-cysteine + [acceptor protein]-L-lysine = [E2 ubiquitin-conjugating enzyme]-L-cysteine + N(6)-ubiquitinyl-[acceptor protein]-L-lysine.. It functions in the pathway protein modification; protein ubiquitination. In terms of biological role, E3 ubiquitin-protein ligase which catalyzes the formation of 'Lys-48'-polyubiquitin chains. Mediates the ubiquitination and subsequent degradation of phosphorylated Akt (AKT1, AKT2 and AKT3) in the nucleus. Acts as a terminal regulator of Akt signaling after activation; its phosphorylation by Akt, which is a prerequisite for ubiquitin ligase activity, suggests the existence of a regulation mechanism required to control Akt levels after activation. Positively regulates TGFB1-induced epithelial-mesenchymal transition and myofibroblast differentiation by mediating the ubiquitination and subsequent degradation of SMURF2. Regulates neuronal differentiation by regulating actin remodeling and Golgi organization via a signaling cascade involving RHOA, CIT and ROCK. Inhibits cell proliferation. The sequence is that of E3 ubiquitin-protein ligase TTC3 (Ttc3) from Mus musculus (Mouse).